The chain runs to 251 residues: tRNA (guanine-N(1)-)-methyltransferase (251 aa).

S-adenosyl-L-methionine contacts are provided by residues Gly122 and 142–147 (IGDYVL). A disordered region spans residues 226–251 (RARRPDLFATRPQPNRQKPPKNTTDG). A compositionally biased stretch (polar residues) spans 237–251 (PQPNRQKPPKNTTDG).

Belongs to the RNA methyltransferase TrmD family. Homodimer.

The protein resides in the cytoplasm. It catalyses the reaction guanosine(37) in tRNA + S-adenosyl-L-methionine = N(1)-methylguanosine(37) in tRNA + S-adenosyl-L-homocysteine + H(+). Functionally, specifically methylates guanosine-37 in various tRNAs. The protein is tRNA (guanine-N(1)-)-methyltransferase of Rhodopseudomonas palustris (strain BisB18).